The primary structure comprises 869 residues: Valine--tRNA ligase (869 aa).

Positions proline 47 to asparagine 57 match the 'HIGH' region motif. The short motif at lysine 521–serine 525 is the 'KMSKS' region element. Lysine 524 lines the ATP pocket.

The protein belongs to the class-I aminoacyl-tRNA synthetase family. ValS type 2 subfamily.

Its subcellular location is the cytoplasm. It carries out the reaction tRNA(Val) + L-valine + ATP = L-valyl-tRNA(Val) + AMP + diphosphate. Functionally, catalyzes the attachment of valine to tRNA(Val). As ValRS can inadvertently accommodate and process structurally similar amino acids such as threonine, to avoid such errors, it has a 'posttransfer' editing activity that hydrolyzes mischarged Thr-tRNA(Val) in a tRNA-dependent manner. The sequence is that of Valine--tRNA ligase from Methanosarcina mazei (strain ATCC BAA-159 / DSM 3647 / Goe1 / Go1 / JCM 11833 / OCM 88) (Methanosarcina frisia).